We begin with the raw amino-acid sequence, 133 residues long: MSNHDPISDMLTRIRNASQKKHTTTTIPGSKMSLSIAKVLQKEGFISDINEEGEGYKSQIILSLKYSGKNKFPTIRSMQRVSKPGLRIYKNTRGLPKVLGGLGVAIISTSKGVMSDRDARKQGIGGEVLCYVY.

It belongs to the universal ribosomal protein uS8 family. In terms of assembly, part of the 30S ribosomal subunit. Contacts proteins S5 and S12.

In terms of biological role, one of the primary rRNA binding proteins, it binds directly to 16S rRNA central domain where it helps coordinate assembly of the platform of the 30S subunit. In Prochlorococcus marinus (strain MIT 9312), this protein is Small ribosomal subunit protein uS8.